Reading from the N-terminus, the 490-residue chain is Probable cytosol aminopeptidase (490 aa).

Mn(2+)-binding residues include lysine 256 and aspartate 261. The active site involves lysine 268. The Mn(2+) site is built by aspartate 280, aspartate 340, and glutamate 342. Arginine 344 is an active-site residue.

This sequence belongs to the peptidase M17 family. It depends on Mn(2+) as a cofactor.

It localises to the cytoplasm. The enzyme catalyses Release of an N-terminal amino acid, Xaa-|-Yaa-, in which Xaa is preferably Leu, but may be other amino acids including Pro although not Arg or Lys, and Yaa may be Pro. Amino acid amides and methyl esters are also readily hydrolyzed, but rates on arylamides are exceedingly low.. The catalysed reaction is Release of an N-terminal amino acid, preferentially leucine, but not glutamic or aspartic acids.. Functionally, presumably involved in the processing and regular turnover of intracellular proteins. Catalyzes the removal of unsubstituted N-terminal amino acids from various peptides. This chain is Probable cytosol aminopeptidase, found in Synechococcus sp. (strain CC9902).